The primary structure comprises 1331 residues: Probable serine/threonine-protein kinase DDB_G0272254 (1331 aa).

Low complexity-rich tracts occupy residues 1–42, 96–116, and 153–175; these read METS…NSSS, NDNNNSSSSSSSSSSGNNNNN, and TQQTPTTTATTNTSTSTTNSTPS. 3 disordered regions span residues 1–43, 92–132, and 150–175; these read METS…SSSA, DKIC…QQIS, and ILNTQQTPTTTATTNTSTSTTNSTPS. 2 consecutive transmembrane segments (helical) span residues 201 to 221 and 224 to 244; these read FGFSPIYFVESIFIVLLIYIL and FVLKETSVYVISIFVIYFVIY. Residues 259 to 287 are compositionally biased toward low complexity; that stretch reads SINDSDSSSNNNNNNNNTTTTNNDSASTK. 4 disordered regions span residues 259–300, 320–419, 435–464, and 512–581; these read SIND…PETY, NLNN…LSKE, SVGKTHNRSSSGSDSIQPPPLPTGGSSHNI, and AHSN…VVGN. Polar residues predominate over residues 288-299; the sequence is GNNNNEISSPET. The segment covering 436–450 has biased composition (polar residues); sequence VGKTHNRSSSGSDSI. Positions 514-531 are enriched in low complexity; the sequence is SNNNNNNNNSNTNNNNNN. Polar residues predominate over residues 532–555; the sequence is QSVSAPVSQLATPVYQTPGTNSVV. Residues 557-577 are compositionally biased toward low complexity; it reads NLENDNENNNDSFSDINDNNS. 6 Kelch repeats span residues 665–710, 716–769, 770–816, 822–868, 909–959, and 962–1008; these read SLVL…NHDY, KFYL…RYGN, RFLL…GHTS, KLII…ELND, NIVM…LIKN, and KLFI…NNNN. The segment covering 834–860 has biased composition (low complexity); it reads NNNNNNNNNNNNNNNNNNNNNNNNNNN. The disordered stretch occupies residues 834 to 862; it reads NNNNNNNNNNNNNNNNNNNNNNNNNNNKG. The disordered stretch occupies residues 976–1042; that stretch reads NNNSSSGGNN…NNNNNNNNNN (67 aa). The region spanning 1073–1331 is the Protein kinase domain; it reads IKIDKEIGKG…EITNYLTKTF (259 aa). ATP-binding positions include 1079–1087 and Lys-1100; that span reads IGKGHFSKV. The Proton acceptor role is filled by Asp-1200.

It belongs to the protein kinase superfamily. TKL Ser/Thr protein kinase family.

The protein resides in the membrane. The catalysed reaction is L-seryl-[protein] + ATP = O-phospho-L-seryl-[protein] + ADP + H(+). The enzyme catalyses L-threonyl-[protein] + ATP = O-phospho-L-threonyl-[protein] + ADP + H(+). The polypeptide is Probable serine/threonine-protein kinase DDB_G0272254 (Dictyostelium discoideum (Social amoeba)).